Reading from the N-terminus, the 414-residue chain is Argininosuccinate synthase (414 aa).

ATP contacts are provided by residues 15–23 and Ala42; that span reads AYSGGLDTS. Positions 93 and 98 each coordinate L-citrulline. Residue Gly123 coordinates ATP. The L-aspartate site is built by Thr125, Asn129, and Asp130. Residue Asn129 participates in L-citrulline binding. 5 residues coordinate L-citrulline: Arg133, Ser182, Ser191, Glu267, and Tyr279.

Belongs to the argininosuccinate synthase family. Type 1 subfamily. In terms of assembly, homotetramer.

Its subcellular location is the cytoplasm. The catalysed reaction is L-citrulline + L-aspartate + ATP = 2-(N(omega)-L-arginino)succinate + AMP + diphosphate + H(+). The protein operates within amino-acid biosynthesis; L-arginine biosynthesis; L-arginine from L-ornithine and carbamoyl phosphate: step 2/3. The protein is Argininosuccinate synthase of Deinococcus geothermalis (strain DSM 11300 / CIP 105573 / AG-3a).